A 254-amino-acid chain; its full sequence is Hydroxyacylglutathione hydrolase (254 aa).

7 residues coordinate Zn(2+): histidine 52, histidine 54, aspartate 56, histidine 57, histidine 109, aspartate 126, and histidine 164.

The protein belongs to the metallo-beta-lactamase superfamily. Glyoxalase II family. In terms of assembly, monomer. Zn(2+) serves as cofactor.

It catalyses the reaction an S-(2-hydroxyacyl)glutathione + H2O = a 2-hydroxy carboxylate + glutathione + H(+). The protein operates within secondary metabolite metabolism; methylglyoxal degradation; (R)-lactate from methylglyoxal: step 2/2. Functionally, thiolesterase that catalyzes the hydrolysis of S-D-lactoyl-glutathione to form glutathione and D-lactic acid. This Stenotrophomonas maltophilia (strain R551-3) protein is Hydroxyacylglutathione hydrolase.